The chain runs to 149 residues: Arginine repressor (149 aa).

Belongs to the ArgR family.

The protein localises to the cytoplasm. Its pathway is amino-acid biosynthesis; L-arginine biosynthesis [regulation]. Functionally, regulates arginine biosynthesis genes. The protein is Arginine repressor of Geobacillus sp. (strain WCH70).